Reading from the N-terminus, the 120-residue chain is Large ribosomal subunit protein uL18 (120 aa).

Belongs to the universal ribosomal protein uL18 family. As to quaternary structure, part of the 50S ribosomal subunit; part of the 5S rRNA/L5/L18/L25 subcomplex. Contacts the 5S and 23S rRNAs.

Its function is as follows. This is one of the proteins that bind and probably mediate the attachment of the 5S RNA into the large ribosomal subunit, where it forms part of the central protuberance. In Rhizobium etli (strain ATCC 51251 / DSM 11541 / JCM 21823 / NBRC 15573 / CFN 42), this protein is Large ribosomal subunit protein uL18.